A 215-amino-acid polypeptide reads, in one-letter code: Vacuolar ATPase assembly integral membrane protein VPH2 (215 aa).

The Cytoplasmic segment spans residues 1 to 134; sequence MFEIKLNDRI…SQINKQIKEQ (134 aa). A helical membrane pass occupies residues 135–155; sequence VTTVFNVLVSVISVVVAIWYW. Topologically, residues 156–167 are lumenal; that stretch reads TGSSTNFPVHVR. Residues 168 to 186 traverse the membrane as a helical segment; sequence LLLCLFFGILVLVADVVVY. Topologically, residues 187–215 are cytoplasmic; it reads NSYLKKLEEAKVKEKTKVEKKKVLSKITL.

It is found in the endoplasmic reticulum membrane. In terms of biological role, required for vacuolar ATPase assembly. The protein is Vacuolar ATPase assembly integral membrane protein VPH2 (VPH2) of Saccharomyces cerevisiae (strain ATCC 204508 / S288c) (Baker's yeast).